A 62-amino-acid chain; its full sequence is Pro-MCH variant (62 aa).

An NGE-like region spans residues 23–41 (GSVAFPAENGVQDTESTQE). Residues 28–62 (PAENGVQDTESTQEKRETGDEENSAQFPIGRRDFD) form a disordered region. Residues 44-56 (ETGDEENSAQFPI) form an NEI-like region. The segment at 60–62 (DFD) is melanin-concentrating hormone-like.

The protein belongs to the melanin-concentrating hormone family.

The chain is Pro-MCH variant (PMCHL1) from Hylobates lar (Lar gibbon).